Here is a 148-residue protein sequence, read N- to C-terminus: Small ribosomal subunit protein uS15 (148 aa).

Residues 1 to 14 (MGRLHSHRHGKSHS) are compositionally biased toward basic residues. The segment at 1-27 (MGRLHSHRHGKSHSIRPSSPKAPSWIQ) is disordered.

The protein belongs to the universal ribosomal protein uS15 family. In terms of assembly, part of the 30S ribosomal subunit.

The protein is Small ribosomal subunit protein uS15 of Cenarchaeum symbiosum (strain A).